We begin with the raw amino-acid sequence, 151 residues long: 3-hydroxyacyl-[acyl-carrier-protein] dehydratase FabZ (151 aa).

Residue H54 is part of the active site.

It belongs to the thioester dehydratase family. FabZ subfamily. In terms of assembly, oligomer. The N-terminus is blocked.

The protein resides in the cytoplasm. The enzyme catalyses a (3R)-hydroxyacyl-[ACP] = a (2E)-enoyl-[ACP] + H2O. Functionally, involved in unsaturated fatty acids biosynthesis. Catalyzes the dehydration of short chain beta-hydroxyacyl-ACPs and long chain saturated and unsaturated beta-hydroxyacyl-ACPs. This is 3-hydroxyacyl-[acyl-carrier-protein] dehydratase FabZ from Escherichia coli O9:H4 (strain HS).